A 576-amino-acid chain; its full sequence is Protein NRT1/ PTR FAMILY 2.12 (576 aa).

11 helical membrane passes run 58–78 (FNVY…GALI), 89–109 (IAYA…TACL), 130–150 (KLQL…SGGI), 176–196 (FFNW…TVVV), 203–223 (WVIG…LFFV), 329–349 (VWSA…FMVF), 364–384 (IPAA…VPIY), 406–426 (MGIG…VEGV), 441–461 (WLAL…IGLI), 475–495 (IANS…SLLV), and 522–542 (YFYY…WYCA).

The protein belongs to the major facilitator superfamily. Proton-dependent oligopeptide transporter (POT/PTR) (TC 2.A.17) family. In terms of tissue distribution, expressed in flowers and siliques. Expressed in vascular bundle of the siliques and in funiculus.

The protein resides in the cell membrane. In terms of biological role, low-affinity proton-dependent nitrate transporter. Not involved in dipeptides transport. Involved in delivering nitrate for seed development. The chain is Protein NRT1/ PTR FAMILY 2.12 (NPF2.12) from Arabidopsis thaliana (Mouse-ear cress).